A 438-amino-acid chain; its full sequence is Transmembrane protein 184C (438 aa).

7 helical membrane-spanning segments follow: residues 17–37 (LVAVIYLVSIVVAVPLCVWEL), 48–68 (AWFIAGIFLLLTIPISLWVIL), 86–106 (ILWMVPIYSLDSWIALKYPGI), 179–199 (YTVVRPFTTIVALICELLGIY), 212–232 (YLVIINNMSQLFAMYCLLLFY), 254–274 (VVFVSFWQAVVIALLVKVGVI), and 287–307 (AVATGLQDFIICIEMFLAAIA). A disordered region spans residues 358 to 438 (PRKKLFPEDQ…KEPSDKSVDS (81 aa)). Low complexity-rich tracts occupy residues 374 to 390 (SLLSSSSQDAISIASSM) and 404 to 413 (TVTPQTTPTT). Ser422 is modified (phosphoserine). Basic and acidic residues predominate over residues 425-438 (IGEKKEPSDKSVDS).

This sequence belongs to the TMEM184 family.

Its subcellular location is the membrane. Possible tumor suppressor which may play a role in cell growth. The protein is Transmembrane protein 184C (TMEM184C) of Pongo abelii (Sumatran orangutan).